A 405-amino-acid polypeptide reads, in one-letter code: uncharacterized protein (405 aa).

A run of 13 helical transmembrane segments spans residues 19–39 (IVSI…PLAV), 48–68 (MGFS…ATLL), 85–105 (IVVF…LADI), 106–126 (ASAW…ILGI), 129–149 (SFAG…LHIG), 156–176 (GIVT…CYAW), 178–198 (GLQG…LLAL), 224–244 (GMAL…ITLF), 252–272 (GAAF…LLFP), 283–303 (VAMI…TAAM), 309–329 (IGVL…GVVA), 344–364 (TYTV…GLVM), and 366–386 (WAGV…ALLL).

It belongs to the major facilitator superfamily. YhhS family.

The protein localises to the cell inner membrane. This is an uncharacterized protein from Salmonella enteritidis PT4 (strain P125109).